The primary structure comprises 242 residues: Transcriptional activator protein BjaR1 (242 aa).

An HTH luxR-type domain is found at 173 to 238 (TPYPSTRLTP…HAVALAIRHK (66 aa)). Residues 197–216 (AWEIGEILHITQRTAEEHLA) constitute a DNA-binding region (H-T-H motif).

This sequence belongs to the autoinducer-regulated transcriptional regulatory protein family.

In terms of biological role, transcriptional activator that functions in response to the quorum-sensing autoinducer IV-HSL (isovaleryl-homoserine lactone). Activates BjaI expression. Is sensitive to IV-HSL at concentrations as low as 10 pM. The chain is Transcriptional activator protein BjaR1 (bjaR1) from Bradyrhizobium diazoefficiens (strain JCM 10833 / BCRC 13528 / IAM 13628 / NBRC 14792 / USDA 110).